The sequence spans 343 residues: NADH-quinone oxidoreductase subunit H (343 aa).

8 helical membrane passes run 21-41 (WTLV…LFCV), 95-115 (FILA…VVPF), 124-144 (VNVG…GVLL), 172-192 (MGFT…GDIV), 197-217 (GLWY…SVVA), 257-277 (IIMV…PPIE), 281-301 (FIPG…FFLW), and 317-337 (LGWK…GLAM).

Belongs to the complex I subunit 1 family. NDH-1 is composed of 14 different subunits. Subunits NuoA, H, J, K, L, M, N constitute the membrane sector of the complex.

It localises to the cell inner membrane. The enzyme catalyses a quinone + NADH + 5 H(+)(in) = a quinol + NAD(+) + 4 H(+)(out). Functionally, NDH-1 shuttles electrons from NADH, via FMN and iron-sulfur (Fe-S) centers, to quinones in the respiratory chain. The immediate electron acceptor for the enzyme in this species is believed to be ubiquinone. Couples the redox reaction to proton translocation (for every two electrons transferred, four hydrogen ions are translocated across the cytoplasmic membrane), and thus conserves the redox energy in a proton gradient. This subunit may bind ubiquinone. This Magnetococcus marinus (strain ATCC BAA-1437 / JCM 17883 / MC-1) protein is NADH-quinone oxidoreductase subunit H.